Here is a 405-residue protein sequence, read N- to C-terminus: Acetate kinase (405 aa).

Residue Asn-13 coordinates Mg(2+). Lys-20 is an ATP binding site. Position 94 (Arg-94) interacts with substrate. Residue Asp-153 is the Proton donor/acceptor of the active site. ATP-binding positions include 213-217, 288-290, and 336-340; these read HLGNG, DFR, and GIGEN. Glu-390 lines the Mg(2+) pocket.

Belongs to the acetokinase family. As to quaternary structure, homodimer. Mg(2+) serves as cofactor. The cofactor is Mn(2+).

The protein localises to the cytoplasm. It catalyses the reaction acetate + ATP = acetyl phosphate + ADP. It participates in metabolic intermediate biosynthesis; acetyl-CoA biosynthesis; acetyl-CoA from acetate: step 1/2. Catalyzes the formation of acetyl phosphate from acetate and ATP. Can also catalyze the reverse reaction. This is Acetate kinase from Buchnera aphidicola subsp. Acyrthosiphon pisum (strain APS) (Acyrthosiphon pisum symbiotic bacterium).